The chain runs to 653 residues: Sodium-dependent phosphate transporter 2 (653 aa).

Position 1 (Met1) is a topological domain, extracellular. The helical transmembrane segment at 2 to 22 (VLVEYLWMVIVGFIIAFILAF) threads the bilayer. Residues 23-46 (SVGANDVANSFGTAVGSGVVTLRQ) lie on the Cytoplasmic side of the membrane. The chain crosses the membrane as a helical span at residues 47-67 (ACILASIFETTGSVLLGAKVG). At 68 to 86 (ETIRKGIIDVNLYNNTVDL) the chain is on the extracellular side. N-linked (GlcNAc...) asparagine glycosylation is present at Asn81. A helical transmembrane segment spans residues 87–107 (LMAGEVSAMVGSAVWQLIASF). Residues 108–109 (LR) are Cytoplasmic-facing. The helical transmembrane segment at 110–130 (LPISGTHCIVGATIGFSLVAI) threads the bilayer. Residues 131–142 (GTHGVQWMQLVK) lie on the Extracellular side of the membrane. Residues 143–163 (IVASWFISPLLSGLMSGALFL) traverse the membrane as a helical segment. Residues 164-187 (MIKFFILKKEDPVPNGLKALPVFY) lie on the Cytoplasmic side of the membrane. A helical transmembrane segment spans residues 188 to 208 (AATIGINVFSILYTGAPLLGL). Residues 209 to 217 (ESFPVWATA) lie on the Extracellular side of the membrane. Residues 218–238 (LLSIGIAIIFALIVWFFVCPW) form a helical membrane-spanning segment. Residues 239–483 (MKKKIASRLK…EDKEEKDKSE (245 aa)) lie on the Cytoplasmic side of the membrane. The helical transmembrane segment at 484-504 (VHLLFHFLQILTACFGSFAHG) threads the bilayer. At 505-532 (GNDVSNAIGPLVALWLIYEQGGVMQEAS) the chain is on the extracellular side. The chain crosses the membrane as a helical span at residues 533–553 (TPVWLLLYGGVGICAGLWVWG). At 554-572 (RRVIQTMGKDLTPITPSSG) the chain is on the cytoplasmic side. A helical membrane pass occupies residues 573 to 587 (FTIELASAFTVVVAS). Residues 588–594 (NIGLPIS) are Extracellular-facing. The chain crosses the membrane as a helical span at residues 595 to 610 (TTHCKVGSVVAVGWIR). The Cytoplasmic portion of the chain corresponds to 611-622 (SRKAVDWRLFRN). A helical membrane pass occupies residues 623–643 (IFLAWFVTVPVAGLFSAGVMA). The Extracellular portion of the chain corresponds to 644–653 (ILQYGILPYV).

It belongs to the inorganic phosphate transporter (PiT) (TC 2.A.20) family. Homodimer.

The protein localises to the cell membrane. It is found in the apical cell membrane. It catalyses the reaction 2 Na(+)(out) + phosphate(out) = 2 Na(+)(in) + phosphate(in). In terms of biological role, sodium-phosphate symporter which preferentially transports the monovalent form of phosphate with a stoichiometry of two sodium ions per phosphate ion. This chain is Sodium-dependent phosphate transporter 2 (slc20a2), found in Xenopus tropicalis (Western clawed frog).